The sequence spans 691 residues: DNA ligase (691 aa).

NAD(+)-binding positions include 53 to 57 (DSEYD), 102 to 103 (SL), and Glu135. Lys137 acts as the N6-AMP-lysine intermediate in catalysis. NAD(+) is bound by residues Arg158, Glu195, Lys310, and Lys334. Cys428, Cys431, Cys446, and Cys452 together coordinate Zn(2+). A BRCT domain is found at 613 to 691 (SEGLPLDGQT…EEEFLALVGE (79 aa)).

Belongs to the NAD-dependent DNA ligase family. LigA subfamily. Mg(2+) serves as cofactor. It depends on Mn(2+) as a cofactor.

The catalysed reaction is NAD(+) + (deoxyribonucleotide)n-3'-hydroxyl + 5'-phospho-(deoxyribonucleotide)m = (deoxyribonucleotide)n+m + AMP + beta-nicotinamide D-nucleotide.. In terms of biological role, DNA ligase that catalyzes the formation of phosphodiester linkages between 5'-phosphoryl and 3'-hydroxyl groups in double-stranded DNA using NAD as a coenzyme and as the energy source for the reaction. It is essential for DNA replication and repair of damaged DNA. This is DNA ligase from Psychrobacter arcticus (strain DSM 17307 / VKM B-2377 / 273-4).